Consider the following 119-residue polypeptide: Ribosome-binding factor A (119 aa).

This sequence belongs to the RbfA family. In terms of assembly, monomer. Binds 30S ribosomal subunits, but not 50S ribosomal subunits or 70S ribosomes.

The protein localises to the cytoplasm. Its function is as follows. One of several proteins that assist in the late maturation steps of the functional core of the 30S ribosomal subunit. Associates with free 30S ribosomal subunits (but not with 30S subunits that are part of 70S ribosomes or polysomes). Required for efficient processing of 16S rRNA. May interact with the 5'-terminal helix region of 16S rRNA. The protein is Ribosome-binding factor A of Limosilactobacillus reuteri (strain DSM 20016) (Lactobacillus reuteri).